The sequence spans 272 residues: Shikimate dehydrogenase (NADP(+)) (272 aa).

Residues 14–16 (SKS) and threonine 61 each bind shikimate. Residue lysine 65 is the Proton acceptor of the active site. Position 77 (glutamate 77) interacts with NADP(+). Positions 86 and 102 each coordinate shikimate. Residues 126–130 (GAGGA), 149–154 (NRTADK), and methionine 212 contribute to the NADP(+) site. Residue tyrosine 214 coordinates shikimate. An NADP(+)-binding site is contributed by glycine 237.

The protein belongs to the shikimate dehydrogenase family. In terms of assembly, homodimer.

It carries out the reaction shikimate + NADP(+) = 3-dehydroshikimate + NADPH + H(+). It participates in metabolic intermediate biosynthesis; chorismate biosynthesis; chorismate from D-erythrose 4-phosphate and phosphoenolpyruvate: step 4/7. In terms of biological role, involved in the biosynthesis of the chorismate, which leads to the biosynthesis of aromatic amino acids. Catalyzes the reversible NADPH linked reduction of 3-dehydroshikimate (DHSA) to yield shikimate (SA). This is Shikimate dehydrogenase (NADP(+)) from Glaesserella parasuis serovar 5 (strain SH0165) (Haemophilus parasuis).